The sequence spans 227 residues: Cytochrome c oxidase subunit 2 (227 aa).

The Mitochondrial intermembrane segment spans residues 1 to 14 (MALPFQLGFQDATS). The helical transmembrane segment at 15–45 (PIMEELLHFHDHTLMIVFMISSLVLYLISSM) threads the bilayer. At 46–59 (LTTRLTHTSTMDAQ) the chain is on the mitochondrial matrix side. A helical transmembrane segment spans residues 60–87 (EVETIWTILPAIILITIALPSLRILYMM). Over 88–227 (DEINNPSMTI…CFEKWSTSML (140 aa)) the chain is Mitochondrial intermembrane. The Cu cation site is built by His-161, Cys-196, Glu-198, Cys-200, His-204, and Met-207. A Mg(2+)-binding site is contributed by Glu-198.

It belongs to the cytochrome c oxidase subunit 2 family. In terms of assembly, component of the cytochrome c oxidase (complex IV, CIV), a multisubunit enzyme composed of 14 subunits. The complex is composed of a catalytic core of 3 subunits MT-CO1, MT-CO2 and MT-CO3, encoded in the mitochondrial DNA, and 11 supernumerary subunits COX4I, COX5A, COX5B, COX6A, COX6B, COX6C, COX7A, COX7B, COX7C, COX8 and NDUFA4, which are encoded in the nuclear genome. The complex exists as a monomer or a dimer and forms supercomplexes (SCs) in the inner mitochondrial membrane with NADH-ubiquinone oxidoreductase (complex I, CI) and ubiquinol-cytochrome c oxidoreductase (cytochrome b-c1 complex, complex III, CIII), resulting in different assemblies (supercomplex SCI(1)III(2)IV(1) and megacomplex MCI(2)III(2)IV(2)). Found in a complex with TMEM177, COA6, COX18, COX20, SCO1 and SCO2. Interacts with TMEM177 in a COX20-dependent manner. Interacts with COX20. Interacts with COX16. Requires Cu cation as cofactor.

It is found in the mitochondrion inner membrane. The enzyme catalyses 4 Fe(II)-[cytochrome c] + O2 + 8 H(+)(in) = 4 Fe(III)-[cytochrome c] + 2 H2O + 4 H(+)(out). Its function is as follows. Component of the cytochrome c oxidase, the last enzyme in the mitochondrial electron transport chain which drives oxidative phosphorylation. The respiratory chain contains 3 multisubunit complexes succinate dehydrogenase (complex II, CII), ubiquinol-cytochrome c oxidoreductase (cytochrome b-c1 complex, complex III, CIII) and cytochrome c oxidase (complex IV, CIV), that cooperate to transfer electrons derived from NADH and succinate to molecular oxygen, creating an electrochemical gradient over the inner membrane that drives transmembrane transport and the ATP synthase. Cytochrome c oxidase is the component of the respiratory chain that catalyzes the reduction of oxygen to water. Electrons originating from reduced cytochrome c in the intermembrane space (IMS) are transferred via the dinuclear copper A center (CU(A)) of subunit 2 and heme A of subunit 1 to the active site in subunit 1, a binuclear center (BNC) formed by heme A3 and copper B (CU(B)). The BNC reduces molecular oxygen to 2 water molecules using 4 electrons from cytochrome c in the IMS and 4 protons from the mitochondrial matrix. In Phyllostomus hastatus (Greater spear-nosed bat), this protein is Cytochrome c oxidase subunit 2 (MT-CO2).